The following is a 117-amino-acid chain: Hainantoxin-XV-5 (117 aa).

The first 20 residues, 1-20 (MKLCAVIIASLLVCVAVASS), serve as a signal peptide directing secretion. The segment at 20–55 (SSDNQKEFAQEKEMTREETQSLGEHEKDDEVTGSEE) is disordered. The propeptide occupies 21–56 (SDNQKEFAQEKEMTREETQSLGEHEKDDEVTGSEER). Over residues 23–55 (NQKEFAQEKEMTREETQSLGEHEKDDEVTGSEE) the composition is skewed to basic and acidic residues. 4 disulfide bridges follow: cysteine 58–cysteine 72, cysteine 65–cysteine 78, cysteine 69–cysteine 115, and cysteine 71–cysteine 91.

The protein belongs to the neurotoxin 03 (Tx2) family. 02 subfamily. HNTX-XV sub-subfamily. As to expression, expressed by the venom gland.

It localises to the secreted. Functionally, putative ion channel inhibitor. The polypeptide is Hainantoxin-XV-5 (Cyriopagopus hainanus (Chinese bird spider)).